A 586-amino-acid polypeptide reads, in one-letter code: Dual specificity tyrosine-phosphorylation-regulated kinase 3 (586 aa).

The segment covering 1–13 has biased composition (basic and acidic residues); sequence MGGAARERGRKDA. Residues 1–187 form a disordered region; it reads MGGAARERGR…QGVIGGPNNG (187 aa). Residues 208-521 enclose the Protein kinase domain; it reads YEVLKIIGKG…PAQALRHPWI (314 aa). Residues 214 to 222, Lys-237, and 287 to 290 each bind ATP; these read IGKGSFGQV and FELL. Asp-334 functions as the Proton acceptor in the catalytic mechanism. Residue Tyr-368 is modified to Phosphotyrosine. Positions 467-480 match the Nuclear localization signal motif; that stretch reads RSRRGKKRGPPGSK.

This sequence belongs to the protein kinase superfamily. CMGC Ser/Thr protein kinase family. MNB/DYRK subfamily. As to quaternary structure, interacts with SIRT1. Mg(2+) serves as cofactor. Post-translationally, protein kinase activity is activated following autophosphorylation at Tyr-368. Ubiquitinated at anaphase by the anaphase-promoting complex (APC/C), leading to its degradation by the proteasome. In terms of tissue distribution, expressed predominantly in testis. Expressed in late pachytene spermatocytes.

Its subcellular location is the nucleus. It is found in the cytoplasm. The protein resides in the nucleus speckle. It localises to the cytoplasmic granule. The protein localises to the cytoskeleton. Its subcellular location is the microtubule organizing center. It is found in the centrosome. It carries out the reaction L-seryl-[protein] + ATP = O-phospho-L-seryl-[protein] + ADP + H(+). It catalyses the reaction L-threonyl-[protein] + ATP = O-phospho-L-threonyl-[protein] + ADP + H(+). The catalysed reaction is L-tyrosyl-[protein] + ATP = O-phospho-L-tyrosyl-[protein] + ADP + H(+). With respect to regulation, protein kinase activity is activated following autophosphorylation at Tyr-368. Functionally, dual-specificity protein kinase that promotes disassembly of several types of membraneless organelles during mitosis, such as stress granules, nuclear speckles and pericentriolar material. Dual-specificity tyrosine-regulated kinases (DYRKs) autophosphorylate a critical tyrosine residue in their activation loop and phosphorylate their substrate on serine and threonine residues. Acts as a central dissolvase of membraneless organelles during the G2-to-M transition, after the nuclear-envelope breakdown: acts by mediating phosphorylation of multiple serine and threonine residues in unstructured domains of proteins, such as SRRM1 and PCM1. Does not mediate disassembly of all membraneless organelles: disassembly of P-body and nucleolus is not regulated by DYRK3. Dissolution of membraneless organelles at the onset of mitosis is also required to release mitotic regulators, such as ZNF207, from liquid-unmixed organelles where they are sequestered and keep them dissolved during mitosis. Regulates mTORC1 by mediating the dissolution of stress granules: during stressful conditions, DYRK3 partitions from the cytosol to the stress granule, together with mTORC1 components, which prevents mTORC1 signaling. When stress signals are gone, the kinase activity of DYRK3 is required for the dissolution of stress granule and mTORC1 relocation to the cytosol: acts by mediating the phosphorylation of the mTORC1 inhibitor AKT1S1, allowing full reactivation of mTORC1 signaling. Also acts as a negative regulator of EPO-dependent erythropoiesis: may place an upper limit on red cell production during stress erythropoiesis. Inhibits cell death due to cytokine withdrawal in hematopoietic progenitor cells. Promotes cell survival upon genotoxic stress through phosphorylation of SIRT1: this in turn inhibits p53/TP53 activity and apoptosis. The sequence is that of Dual specificity tyrosine-phosphorylation-regulated kinase 3 from Rattus norvegicus (Rat).